Consider the following 354-residue polypeptide: Rhodopsin (354 aa).

The Extracellular portion of the chain corresponds to 1–36 (MNGTEGPDFYVPMVNTTGIVRSPYDYPQYYLVNPAA). N-linked (GlcNAc...) asparagine glycosylation is found at Asn-2 and Asn-15. The chain crosses the membrane as a helical span at residues 37 to 61 (FSMLAAYMFFLILVGFPVNFLTLYV). The Cytoplasmic portion of the chain corresponds to 62-73 (TMEHKKLRTPLN). The helical transmembrane segment at 74–96 (YILLNLAVANLFMVIGGFTTTMY) threads the bilayer. Residues 97-110 (TSMHGYFVLGRTGC) lie on the Extracellular side of the membrane. The cysteines at positions 110 and 187 are disulfide-linked. The chain crosses the membrane as a helical span at residues 111–133 (NLEGFFATLGGEIALWSLVVLAV). Residues 134–136 (ERW) carry the 'Ionic lock' involved in activated form stabilization motif. The Cytoplasmic portion of the chain corresponds to 134 to 152 (ERWVVVCKPISNFRFGENH). A helical membrane pass occupies residues 153-173 (AVMGVSFTWLMACACSVPPLF). The Extracellular segment spans residues 174–202 (GWSRYIPEGMQCSCGIDYYTRAPGYNNES). A helical transmembrane segment spans residues 203 to 224 (FVIYMFVCHFSIPLTIIFFCYG). Residues 225-252 (RLLCAVKDAAAAQQESETTQRAEREVSR) are Cytoplasmic-facing. Residues 253-274 (MVVIMVIGFLICWLPYASVAWF) form a helical membrane-spanning segment. Residues 275 to 286 (IFTHQGSEFGPV) lie on the Extracellular side of the membrane. The chain crosses the membrane as a helical span at residues 287–308 (FMTIPAFFAKSSAIYNPMIYIC). The residue at position 296 (Lys-296) is an N6-(retinylidene)lysine. The Cytoplasmic portion of the chain corresponds to 309-354 (MNKQFRHCMITTLCCGKNPFEEEEGASTTASKTEASSVSSSHVSPA). S-palmitoyl cysteine attachment occurs at residues Cys-322 and Cys-323. The disordered stretch occupies residues 333-354 (GASTTASKTEASSVSSSHVSPA). Residues 334 to 354 (ASTTASKTEASSVSSSHVSPA) show a composition bias toward low complexity.

Belongs to the G-protein coupled receptor 1 family. Opsin subfamily. In terms of processing, phosphorylated on some or all of the serine and threonine residues present in the C-terminal region. Contains one covalently linked retinal chromophore.

The protein resides in the membrane. It localises to the cell projection. It is found in the cilium. Its subcellular location is the photoreceptor outer segment. In terms of biological role, photoreceptor required for image-forming vision at low light intensity. While most salt water fish species use retinal as chromophore, most freshwater fish use 3-dehydroretinal, or a mixture of retinal and 3-dehydroretinal. Light-induced isomerization of 11-cis to all-trans retinal triggers a conformational change that activates signaling via G-proteins. Subsequent receptor phosphorylation mediates displacement of the bound G-protein alpha subunit by arrestin and terminates signaling. The chain is Rhodopsin (rho) from Zeus faber (John Dory).